The following is a 341-amino-acid chain: Basic membrane protein B (341 aa).

The first 14 residues, 1–14, serve as a signal peptide directing secretion; that stretch reads MRIAIFIFGILLTS. Cys-15 carries the N-palmitoyl cysteine lipid modification. Cys-15 is lipidated: S-diacylglycerol cysteine.

The protein belongs to the BMP lipoprotein family. As to quaternary structure, monomer.

Its subcellular location is the cell inner membrane. In terms of biological role, may be part of an ABC-type nucleoside uptake system involved in the purine salvage pathway. The protein is Basic membrane protein B (bmpB) of Borreliella afzelii (strain PKo) (Borrelia afzelii).